The sequence spans 482 residues: ATP synthase subunit beta (482 aa).

ATP is bound at residue 162–169; that stretch reads GGAGVGKT.

This sequence belongs to the ATPase alpha/beta chains family. F-type ATPases have 2 components, CF(1) - the catalytic core - and CF(0) - the membrane proton channel. CF(1) has five subunits: alpha(3), beta(3), gamma(1), delta(1), epsilon(1). CF(0) has four main subunits: a(1), b(1), b'(1) and c(9-12).

It localises to the cellular thylakoid membrane. It carries out the reaction ATP + H2O + 4 H(+)(in) = ADP + phosphate + 5 H(+)(out). Its function is as follows. Produces ATP from ADP in the presence of a proton gradient across the membrane. The catalytic sites are hosted primarily by the beta subunits. The sequence is that of ATP synthase subunit beta from Nostoc punctiforme (strain ATCC 29133 / PCC 73102).